A 478-amino-acid polypeptide reads, in one-letter code: ATP-dependent DNA helicase RecQ (478 aa).

The Helicase ATP-binding domain maps to 28-202; it reads IDCLLARRDC…VEGLNLRSPE (175 aa). 41–48 lines the ATP pocket; sequence LPTGGGKS. The short motif at 142–145 is the DEAH box element; it reads DEAH. Residues 229 to 380 enclose the Helicase C-terminal domain; it reads QLRRFLLKHL…RAEVLSQQIP (152 aa). Cys447, Cys467, Cys470, and Cys473 together coordinate Zn(2+).

It belongs to the helicase family. RecQ subfamily. Requires Mg(2+) as cofactor. It depends on Zn(2+) as a cofactor.

The catalysed reaction is Couples ATP hydrolysis with the unwinding of duplex DNA by translocating in the 3'-5' direction.. The enzyme catalyses ATP + H2O = ADP + phosphate + H(+). An ATP-dependent DNA helicase which unwinds DNA in a 3'-5' direction. This Synechocystis sp. (strain ATCC 27184 / PCC 6803 / Kazusa) protein is ATP-dependent DNA helicase RecQ.